Consider the following 176-residue polypeptide: Ribosome maturation factor RimM (176 aa).

One can recognise a PRC barrel domain in the interval 93–166 (ADEYYHADLI…QVVIEPPNEI (74 aa)).

Belongs to the RimM family. As to quaternary structure, binds ribosomal protein uS19.

The protein localises to the cytoplasm. Its function is as follows. An accessory protein needed during the final step in the assembly of 30S ribosomal subunit, possibly for assembly of the head region. Essential for efficient processing of 16S rRNA. May be needed both before and after RbfA during the maturation of 16S rRNA. It has affinity for free ribosomal 30S subunits but not for 70S ribosomes. This Rhodopseudomonas palustris (strain ATCC BAA-98 / CGA009) protein is Ribosome maturation factor RimM.